The sequence spans 160 residues: Secreted RxLR effector protein 83 (160 aa).

Residues 1 to 21 form the signal peptide; sequence MLVLLAATFFIYISRLTSTDA. The RxLR motif lies at 27-30; that stretch reads RGLR. Residues asparagine 39 and asparagine 131 are each glycosylated (N-linked (GlcNAc...) asparagine).

The protein belongs to the RxLR effector family.

It is found in the secreted. It localises to the host nucleus. The protein localises to the host cytoplasm. Functionally, secreted effector that completely suppresses the host cell death induced by cell death-inducing proteins. This chain is Secreted RxLR effector protein 83, found in Plasmopara viticola (Downy mildew of grapevine).